The chain runs to 367 residues: Probable butyrate kinase (367 aa).

This sequence belongs to the acetokinase family.

Its subcellular location is the cytoplasm. It carries out the reaction butanoate + ATP = butanoyl phosphate + ADP. The protein is Probable butyrate kinase of Exiguobacterium sibiricum (strain DSM 17290 / CCUG 55495 / CIP 109462 / JCM 13490 / 255-15).